Reading from the N-terminus, the 431-residue chain is UDP-N-acetylmuramate--L-alanine ligase (431 aa).

108-114 (GAHGKST) contributes to the ATP binding site.

It belongs to the MurCDEF family.

It is found in the cytoplasm. It catalyses the reaction UDP-N-acetyl-alpha-D-muramate + L-alanine + ATP = UDP-N-acetyl-alpha-D-muramoyl-L-alanine + ADP + phosphate + H(+). It functions in the pathway cell wall biogenesis; peptidoglycan biosynthesis. Cell wall formation. In Campylobacter jejuni subsp. jejuni serotype O:6 (strain 81116 / NCTC 11828), this protein is UDP-N-acetylmuramate--L-alanine ligase.